The following is a 728-amino-acid chain: MQSQSVMLELREQDEVWVRLYKGERENAVFSDEYDTYITFSGHLINFQPAAEPLGTTVLHAAVDTRPQPARYFDTGTTEPVSFFLSGLEELLAWHPSSDDEFNVCAVPLAQRQPPLHSRRPRTLLCHDMRGGYLEDRFIQGSATRNPYVFYHWRYVDIFVYFSHHTVTIPPVCWTNAAHRNGVPVLGTFITEWADGEKLCEAFLAGGEDAYRAVSHQLARIAQHYRFDGWLINIENALSAAAVGNLSPFLRHLTAEVHGAVPGGLVIWYDSILESGTLRWQNELNQQNRVFFDACDGLFVNYNWKEEHLERTRELAGQRHADVYIGVDVFARGDVVGGGFDTNKSLSLIRKHGLSAAIFAPGWVYKHLGEENFLLNEDKFWGLLEDYLPTHSICTLPLATSFSVGMGTGMFLAGKEEEAGPWYNLSAQEIQPLYPERRGWLSTSCCLQDAWCGGSSLRVQGTIPPGEERVAIRLSLWVDLGSSGFSLSICGTLASGPHRDDFTVALELTTWHSSRCHDGTVTVLPSEDEPHGRHHPHLLPAPPPALSRMLAACSHGAQGWTSRCYEQELRGCSLRDLSLLVSRQQASPQETSFSCLLGELRVLDAGSMAASPPQVQSLTASQLWWQDGPSAEQLSLSLTLRWAFPPGRAACFRVLSQGARCHRAQPAQPQLLGLAHGCQYRAVGLAVPRPAPGQSCQLELLVEPVLPSELPVGPERWGRLLLVYSEPA.

In terms of domain architecture, BRCT spans 287–381 (QNRVFFDACD…NFLLNEDKFW (95 aa)).

Belongs to the glycosyl hydrolase 85 family.

It is found in the cytoplasm. The protein localises to the cytosol. It catalyses the reaction an N(4)-(oligosaccharide-(1-&gt;3)-[oligosaccharide-(1-&gt;6)]-beta-D-Man-(1-&gt;4)-beta-D-GlcNAc-(1-&gt;4)-alpha-D-GlcNAc)-L-asparaginyl-[protein] + H2O = an oligosaccharide-(1-&gt;3)-[oligosaccharide-(1-&gt;6)]-beta-D-Man-(1-&gt;4)-D-GlcNAc + N(4)-(N-acetyl-beta-D-glucosaminyl)-L-asparaginyl-[protein]. Functionally, endoglycosidase that releases N-glycans from glycoproteins by cleaving the beta-1,4-glycosidic bond in the N,N'-diacetylchitobiose core. Involved in the processing of free oligosaccharides in the cytosol. The sequence is that of Cytosolic endo-beta-N-acetylglucosaminidase (ENGASE) from Gallus gallus (Chicken).